We begin with the raw amino-acid sequence, 437 residues long: Phenylacetate-coenzyme A ligase (437 aa).

The protein belongs to the phenylacetyl-CoA ligase family. In terms of assembly, monomer.

It carries out the reaction 2-phenylacetate + ATP + CoA = phenylacetyl-CoA + AMP + diphosphate. It participates in aromatic compound metabolism; phenylacetate degradation. Catalyzes the activation of phenylacetic acid (PA) to phenylacetyl-CoA (PA-CoA). In Escherichia coli (strain K12), this protein is Phenylacetate-coenzyme A ligase (paaK).